We begin with the raw amino-acid sequence, 1355 residues long: Ecdysone-induced protein 75B, isoform A (1355 aa).

4 disordered regions span residues 60-91 (QHQP…QQHS), 126-228 (RLKN…DSSY), 248-268 (ELEQ…EAKP), and 308-344 (ATQQ…NSSA). A compositionally biased stretch (basic residues) spans 66–76 (QLHHQHQHQHQ). 2 stretches are compositionally biased toward low complexity: residues 77–91 (HQQQ…QQHS) and 143–179 (TLVK…QHQQ). Positions 200–213 (SGIDEDSPNSDEDC) are enriched in acidic residues. Polar residues-rich tracts occupy residues 218-228 (PAGTSLEDSSY) and 254-264 (TTGGSNAQQQV). 2 stretches are compositionally biased toward low complexity: residues 308–321 (ATQQ…QHQH) and 330–344 (DSNC…NSSA). The segment at residues 384 to 474 (SQLNYLCQKF…VGMSRDAVRF (91 aa)) is a DNA-binding region (nuclear receptor). An NR C4-type; degenerate zinc finger spans residues 387-421 (NYLCQKFDEKLDTALSNSSANTGRNTPAVTANEDA). Residues 438–457 (CTKNQQCSILRINRNRCQYC) form an NR C4-type zinc finger. The 249-residue stretch at 508–756 (DQPRLLAAVL…QQMWSMEDGN (249 aa)) folds into the NR LBD domain. Disordered regions lie at residues 780-821 (KSPL…SALA), 927-964 (LDSP…SVDD), 987-1007 (VSVS…KRQI), 1051-1117 (AEAD…SSHS), 1147-1260 (ENST…SNSA), and 1312-1344 (TVTA…NPGL). Low complexity-rich tracts occupy residues 797–809 (GSPS…GVSL), 948–960 (SSGG…SPRS), 987–1001 (VSVS…STSS), 1053–1098 (ADAS…AQSQ), and 1106–1117 (SSPKASMASSHS). Polar residues-rich tracts occupy residues 1149–1162 (STAA…VGNR) and 1174–1196 (AVQN…QRQQ). 3 stretches are compositionally biased toward low complexity: residues 1197–1233 (SVSP…SASS), 1242–1260 (STSN…SNSA), and 1315–1343 (ASNG…PNPG).

Belongs to the nuclear hormone receptor family. NR1 subfamily.

It localises to the nucleus. Implicated in the regulation of ecdysone-triggered gene hierarchies. Probably plays a key role in mediating the regulation of the larval molt by 20-OH-ecdysone. The polypeptide is Ecdysone-induced protein 75B, isoform A (Eip75B) (Drosophila melanogaster (Fruit fly)).